We begin with the raw amino-acid sequence, 682 residues long: Potassium-transporting ATPase ATP-binding subunit (682 aa).

4 helical membrane-spanning segments follow: residues 34–54 (PVMF…IAMA), 62–82 (ALFS…ANFA), 219–239 (IALT…TATL), and 254–274 (VLVA…LSAI). Catalysis depends on aspartate 307, which acts as the 4-aspartylphosphate intermediate. ATP is bound by residues aspartate 344, glutamate 348, 377–384 (FTAQSRMS), and lysine 395. The Mg(2+) site is built by aspartate 518 and aspartate 522. 3 helical membrane-spanning segments follow: residues 588-608 (FAII…LNIM), 616-636 (AILS…PLAL), and 656-676 (IYGL…DLLL).

The protein belongs to the cation transport ATPase (P-type) (TC 3.A.3) family. Type IA subfamily. In terms of assembly, the system is composed of three essential subunits: KdpA, KdpB and KdpC.

The protein localises to the cell inner membrane. It carries out the reaction K(+)(out) + ATP + H2O = K(+)(in) + ADP + phosphate + H(+). Part of the high-affinity ATP-driven potassium transport (or Kdp) system, which catalyzes the hydrolysis of ATP coupled with the electrogenic transport of potassium into the cytoplasm. This subunit is responsible for energy coupling to the transport system and for the release of the potassium ions to the cytoplasm. The polypeptide is Potassium-transporting ATPase ATP-binding subunit (Shigella boydii serotype 18 (strain CDC 3083-94 / BS512)).